The primary structure comprises 228 residues: Vesicle transport protein SEC20 (228 aa).

Residues 1 to 199 (MAAPQDVHVR…LITKYNRREL (199 aa)) lie on the Cytoplasmic side of the membrane. Positions 37–90 (LSELTELNTKVKEKFQQLKHRIQELEQSAKEQDKESEKQLLLQEVENHKKQMLS) form a coiled coil. Residues 200-220 (TDKLLIFLALALFLATVLYIV) form a helical; Anchor for type IV membrane protein membrane-spanning segment. The Lumenal segment spans residues 221–228 (KKRLFPFL).

This sequence belongs to the SEC20 family. As to quaternary structure, component of a SNARE complex consisting of STX18, USE1L, BNIP1/SEC20L and SEC22B. Interacts directly with STX18, RINT1/TIP20L and NAPA. Interacts with ZW10 through RINT1. Interacts with BCL2. Interacts with RNF186. Interacts with RNF185. Interacts with SQSTM1; increased by 'Lys-63'-linked polyubiquitination of BNIP1. In terms of processing, polyubiquitinated. 'Lys-63'-linked polyubiquitination by RNF185 increases the interaction with the autophagy receptor SQSTM1. Undergoes 'Lys-29'- and 'Lys-63'-linked polyubiquitination by RNF186 that may regulate BNIP1 localization to the mitochondrion.

It localises to the endoplasmic reticulum membrane. Its subcellular location is the mitochondrion membrane. In terms of biological role, as part of a SNARE complex may be involved in endoplasmic reticulum membranes fusion and be required for the maintenance of endoplasmic reticulum organization. Also plays a role in apoptosis. It is for instance required for endoplasmic reticulum stress-induced apoptosis. As a substrate of RNF185 interacting with SQSTM1, might also be involved in mitochondrial autophagy. This Rattus norvegicus (Rat) protein is Vesicle transport protein SEC20.